An 846-amino-acid chain; its full sequence is ATR-interacting protein mus304 (846 aa).

Disordered regions lie at residues 20–40 (DVSV…FDGI), 90–109 (QGST…QKKP), and 135–162 (EPQK…KTTT). Low complexity predominate over residues 144–162 (TSTSRITTSSISVQQKTTT). Coiled coils occupy residues 168–240 (ATQS…LADE) and 327–359 (EYSE…LQAK). Positions 504–510 (EELLFDL) match the EEXXXDL motif motif. Positions 651–681 (GAVQGSVSNGSTSASVSNPNQNSNSSTTQRG) are disordered. Residues 655-676 (GSVSNGSTSASVSNPNQNSNSS) show a composition bias toward low complexity.

The protein belongs to the ATRIP family. As to quaternary structure, interacts with ATR/mei-41. In terms of tissue distribution, highly expressed in the oocyte and nurse cells from stage 5 onward and in embryos prior to during nuclear division 14. Then, it decreases to background levels during interphase 14. Weakly or not expressed in stage embryos and imaginal disks.

It localises to the cytoplasm. DNA damage checkpoint protein required for chromosome break repair and for genomic stability during development. The protein is ATR-interacting protein mus304 (mus304) of Drosophila melanogaster (Fruit fly).